Here is a 337-residue protein sequence, read N- to C-terminus: Ribosomal RNA small subunit methyltransferase H (337 aa).

S-adenosyl-L-methionine-binding positions include 45–47 (GGH), Asp64, Phe91, Asp120, and Gln127.

This sequence belongs to the methyltransferase superfamily. RsmH family.

The protein resides in the cytoplasm. The catalysed reaction is cytidine(1402) in 16S rRNA + S-adenosyl-L-methionine = N(4)-methylcytidine(1402) in 16S rRNA + S-adenosyl-L-homocysteine + H(+). Functionally, specifically methylates the N4 position of cytidine in position 1402 (C1402) of 16S rRNA. In Corynebacterium glutamicum (strain R), this protein is Ribosomal RNA small subunit methyltransferase H.